The primary structure comprises 292 residues: 2-(5''-triphosphoribosyl)-3'-dephosphocoenzyme-A synthase (292 aa).

The protein belongs to the CitG/MdcB family.

It catalyses the reaction 3'-dephospho-CoA + ATP = 2'-(5''-triphospho-alpha-D-ribosyl)-3'-dephospho-CoA + adenine. Catalyzes the formation of 2-(5''-triphosphoribosyl)-3'-dephosphocoenzyme-A, the precursor of the prosthetic group of the holo-acyl carrier protein (gamma chain) of citrate lyase, from ATP and dephospho-CoA. The chain is 2-(5''-triphosphoribosyl)-3'-dephosphocoenzyme-A synthase from Escherichia coli O127:H6 (strain E2348/69 / EPEC).